Reading from the N-terminus, the 109-residue chain is Transcription initiation factor IIA subunit 2 (109 aa).

It belongs to the TFIIA subunit 2 family. As to quaternary structure, TFIIA is a heterodimer of the large unprocessed subunit 1 and a small subunit gamma. It was originally believed to be a heterotrimer of an alpha (p35), a beta (p19) and a gamma subunit (p12). Interacts with NCOA6 general coactivator. TFIIA forms a complex with TBP. Interacts with HSF1 (via transactivation domain). Part of TBP-based Pol II pre-initiation complex (PIC), in which Pol II core assembles with general transcription factors and other specific initiation factors including GTF2E1, GTF2E2, GTF2F1, GTF2F2, TCEA1, ERCC2, ERCC3, GTF2H2, GTF2H3, GTF2H4, GTF2H5, GTF2A1, GTF2A2, GTF2B and TBP; this large multi-subunit PIC complex mediates DNA unwinding and targets Pol II core to the transcription start site where the first phosphodiester bond forms.

The protein localises to the nucleus. Its function is as follows. TFIIA is a component of the transcription machinery of RNA polymerase II and plays an important role in transcriptional activation. TFIIA in a complex with TBP mediates transcriptional activity. The protein is Transcription initiation factor IIA subunit 2 (Gtf2a2) of Rattus norvegicus (Rat).